The sequence spans 875 residues: DNA mismatch repair protein MutS (875 aa).

Position 625-632 (625-632 (GPNMGGKS)) interacts with ATP.

The protein belongs to the DNA mismatch repair MutS family.

Its function is as follows. This protein is involved in the repair of mismatches in DNA. It is possible that it carries out the mismatch recognition step. This protein has a weak ATPase activity. This is DNA mismatch repair protein MutS from Symbiobacterium thermophilum (strain DSM 24528 / JCM 14929 / IAM 14863 / T).